We begin with the raw amino-acid sequence, 90 residues long: MKTAIFTVVLALAVFAVLSFGWEANEKALSEEFTELIHEKEAASETEARECRYFWGECHDHMPCCDWFVCRYKWPITYNICVWNRTFPEK.

Positions 1–19 are cleaved as a signal peptide; it reads MKTAIFTVVLALAVFAVLS. The propeptide occupies 20–50; sequence FGWEANEKALSEEFTELIHEKEAASETEARE. Disulfide bonds link Cys-51–Cys-65, Cys-58–Cys-70, and Cys-64–Cys-81.

This sequence belongs to the neurotoxin 10 (Hwtx-1) family. 13 (Hntx-13) subfamily. As to expression, expressed by the venom gland.

It localises to the secreted. Its function is as follows. Ion channel inhibitor. This chain is U7-theraphotoxin-Hhn1b, found in Cyriopagopus hainanus (Chinese bird spider).